The primary structure comprises 311 residues: Methionyl-tRNA formyltransferase (311 aa).

(6S)-5,6,7,8-tetrahydrofolate is bound at residue 109-112 (SLLP).

Belongs to the Fmt family.

It catalyses the reaction L-methionyl-tRNA(fMet) + (6R)-10-formyltetrahydrofolate = N-formyl-L-methionyl-tRNA(fMet) + (6S)-5,6,7,8-tetrahydrofolate + H(+). In terms of biological role, attaches a formyl group to the free amino group of methionyl-tRNA(fMet). The formyl group appears to play a dual role in the initiator identity of N-formylmethionyl-tRNA by promoting its recognition by IF2 and preventing the misappropriation of this tRNA by the elongation apparatus. In Staphylococcus aureus (strain USA300), this protein is Methionyl-tRNA formyltransferase.